The chain runs to 392 residues: Succinate--CoA ligase [ADP-forming] subunit beta (392 aa).

One can recognise an ATP-grasp domain in the interval Arg-9–Ala-236. Residues Lys-45, Gly-52–Gly-54, Ala-94, and Glu-99 contribute to the ATP site. The Mg(2+) site is built by Asn-191 and Asp-205. Residues Asn-256 and Gly-318–Thr-320 contribute to the substrate site.

The protein belongs to the succinate/malate CoA ligase beta subunit family. As to quaternary structure, heterotetramer of two alpha and two beta subunits. Mg(2+) serves as cofactor.

The enzyme catalyses succinate + ATP + CoA = succinyl-CoA + ADP + phosphate. The catalysed reaction is GTP + succinate + CoA = succinyl-CoA + GDP + phosphate. The protein operates within carbohydrate metabolism; tricarboxylic acid cycle; succinate from succinyl-CoA (ligase route): step 1/1. Its function is as follows. Succinyl-CoA synthetase functions in the citric acid cycle (TCA), coupling the hydrolysis of succinyl-CoA to the synthesis of either ATP or GTP and thus represents the only step of substrate-level phosphorylation in the TCA. The beta subunit provides nucleotide specificity of the enzyme and binds the substrate succinate, while the binding sites for coenzyme A and phosphate are found in the alpha subunit. The sequence is that of Succinate--CoA ligase [ADP-forming] subunit beta from Salinispora arenicola (strain CNS-205).